Here is a 191-residue protein sequence, read N- to C-terminus: Leucyl/phenylalanyl-tRNA--protein transferase (191 aa).

It belongs to the L/F-transferase family.

The protein resides in the cytoplasm. It catalyses the reaction N-terminal L-lysyl-[protein] + L-leucyl-tRNA(Leu) = N-terminal L-leucyl-L-lysyl-[protein] + tRNA(Leu) + H(+). The enzyme catalyses N-terminal L-arginyl-[protein] + L-leucyl-tRNA(Leu) = N-terminal L-leucyl-L-arginyl-[protein] + tRNA(Leu) + H(+). The catalysed reaction is L-phenylalanyl-tRNA(Phe) + an N-terminal L-alpha-aminoacyl-[protein] = an N-terminal L-phenylalanyl-L-alpha-aminoacyl-[protein] + tRNA(Phe). Functionally, functions in the N-end rule pathway of protein degradation where it conjugates Leu, Phe and, less efficiently, Met from aminoacyl-tRNAs to the N-termini of proteins containing an N-terminal arginine or lysine. The chain is Leucyl/phenylalanyl-tRNA--protein transferase from Trichormus variabilis (strain ATCC 29413 / PCC 7937) (Anabaena variabilis).